The following is a 461-amino-acid chain: Bifunctional protein GlmU (461 aa).

The segment at 1–232 (MNLQIIILAA…SFEVQGINNR (232 aa)) is pyrophosphorylase. UDP-N-acetyl-alpha-D-glucosamine-binding positions include 8–11 (LAAG), K22, Q73, and 78–79 (GT). Position 102 (D102) interacts with Mg(2+). 3 residues coordinate UDP-N-acetyl-alpha-D-glucosamine: G142, E157, and N230. N230 provides a ligand contact to Mg(2+). A linker region spans residues 233–253 (QQLQQLERIWQQRAANQLMEK). Positions 254–461 (GATLADANRF…WKRPVKRERD (208 aa)) are N-acetyltransferase. Residues R336 and K354 each contribute to the UDP-N-acetyl-alpha-D-glucosamine site. H366 serves as the catalytic Proton acceptor. The UDP-N-acetyl-alpha-D-glucosamine site is built by Y369 and N380. Acetyl-CoA is bound by residues A383, 389 to 390 (NY), S408, and A426.

The protein in the N-terminal section; belongs to the N-acetylglucosamine-1-phosphate uridyltransferase family. It in the C-terminal section; belongs to the transferase hexapeptide repeat family. As to quaternary structure, homotrimer. Mg(2+) serves as cofactor.

It localises to the cytoplasm. It carries out the reaction alpha-D-glucosamine 1-phosphate + acetyl-CoA = N-acetyl-alpha-D-glucosamine 1-phosphate + CoA + H(+). The enzyme catalyses N-acetyl-alpha-D-glucosamine 1-phosphate + UTP + H(+) = UDP-N-acetyl-alpha-D-glucosamine + diphosphate. The protein operates within nucleotide-sugar biosynthesis; UDP-N-acetyl-alpha-D-glucosamine biosynthesis; N-acetyl-alpha-D-glucosamine 1-phosphate from alpha-D-glucosamine 6-phosphate (route II): step 2/2. It participates in nucleotide-sugar biosynthesis; UDP-N-acetyl-alpha-D-glucosamine biosynthesis; UDP-N-acetyl-alpha-D-glucosamine from N-acetyl-alpha-D-glucosamine 1-phosphate: step 1/1. It functions in the pathway bacterial outer membrane biogenesis; LPS lipid A biosynthesis. Functionally, catalyzes the last two sequential reactions in the de novo biosynthetic pathway for UDP-N-acetylglucosamine (UDP-GlcNAc). The C-terminal domain catalyzes the transfer of acetyl group from acetyl coenzyme A to glucosamine-1-phosphate (GlcN-1-P) to produce N-acetylglucosamine-1-phosphate (GlcNAc-1-P), which is converted into UDP-GlcNAc by the transfer of uridine 5-monophosphate (from uridine 5-triphosphate), a reaction catalyzed by the N-terminal domain. The chain is Bifunctional protein GlmU from Legionella pneumophila (strain Corby).